The primary structure comprises 453 residues: Tryptophan dimethylallyltransferase cnsF (453 aa).

L-tryptophan-binding positions include 84 to 85 (IL) and Glu-93. Substrate contacts are provided by Arg-104, Lys-190, and Tyr-192. Positions 194 and 248 each coordinate L-tryptophan. 5 residues coordinate substrate: Arg-261, Lys-263, Tyr-265, Gln-347, and Tyr-349.

This sequence belongs to the tryptophan dimethylallyltransferase family. As to quaternary structure, homodimer.

The catalysed reaction is L-tryptophan + dimethylallyl diphosphate = 4-(3-methylbut-2-enyl)-L-tryptophan + diphosphate. The protein operates within alkaloid biosynthesis. Its function is as follows. Tryptophan dimethylallyltransferase; part of the gene cluster that mediates the biosynthesis of communesins, a prominent class of indole alkaloids with great potential as pharmaceuticals. Communesins are biosynthesized by the coupling of tryptamine and aurantioclavine, two building blocks derived from L-tryptophan. The L-tryptophan decarboxylase cnsB converts L-tryptophan to tryptamine, whereas the tryptophan dimethylallyltransferase cnsF converts L-tryptophan to 4-dimethylallyl tryptophan which is further transformed to aurantioclavine by the aurantioclavine synthase cnsA, probably aided by the catalase cnsD. The cytochrome P450 monooxygenase cnsC catalyzes the heterodimeric coupling between the two different indole moieties, tryptamine and aurantioclavine, to construct vicinal quaternary stereocenters and yield the heptacyclic communesin scaffold. The O-methyltransferase cnsE then methylates the communesin scaffold to produce communesin K, the simplest characterized communesin that contains the heptacyclic core. The dioxygenase cnsJ converts communesin K into communesin I. Acylation to introduce the hexadienyl group at position N16 of communesin I by the acyltransferase cnsK leads to the production of communesin B. The hexadienyl group is produced by the highly reducing polyketide synthase cnsI, before being hydrolytically removed from cnsI by the serine hydrolase cnsH, converted into hexadienyl-CoA by the CoA ligase cnsG, and then transferred to communesin I by cnsK. Surprisingly, cnsK may also be a promiscuous acyltransferase that can tolerate a range of acyl groups, including acetyl-, propionyl-, and butyryl-CoA, which lead to communesins A, G and H respectively. The roles of the alpha-ketoglutarate-dependent dioxygenases cnsM and cnsP have still to be determined. The sequence is that of Tryptophan dimethylallyltransferase cnsF from Penicillium expansum (Blue mold rot fungus).